A 424-amino-acid polypeptide reads, in one-letter code: UPF0053 protein MG146 homolog (424 aa).

One can recognise a CNNM transmembrane domain in the interval 6-191 (SGGLLALIII…EQNGLFTKED (186 aa)). Helical transmembrane passes span 7 to 27 (GGLL…SAVV), 71 to 91 (LITI…ILFL), 101 to 121 (AISS…LCEI), and 135 to 155 (LVYF…ITKL). CBS domains follow at residues 210-270 (MIKW…NEPF) and 275-335 (LLYP…EHDE).

This sequence belongs to the UPF0053 family.

Its subcellular location is the cell membrane. In Mycoplasma pneumoniae (strain ATCC 29342 / M129 / Subtype 1) (Mycoplasmoides pneumoniae), this protein is UPF0053 protein MG146 homolog.